Here is a 236-residue protein sequence, read N- to C-terminus: (5-formylfuran-3-yl)methyl phosphate synthase (236 aa).

Lysine 27 serves as the catalytic Schiff-base intermediate with substrate. Lysine 85 functions as the Proton acceptor in the catalytic mechanism.

It belongs to the MfnB family.

It catalyses the reaction 2 D-glyceraldehyde 3-phosphate = 4-(hydroxymethyl)-2-furancarboxaldehyde phosphate + phosphate + 2 H2O. Its pathway is cofactor biosynthesis; methanofuran biosynthesis. Catalyzes the formation of 4-(hydroxymethyl)-2-furancarboxaldehyde phosphate (4-HFC-P) from two molecules of glyceraldehyde-3-P (GA-3-P). The protein is (5-formylfuran-3-yl)methyl phosphate synthase of Methanococcus maripaludis (strain C5 / ATCC BAA-1333).